A 165-amino-acid chain; its full sequence is Free methionine-R-sulfoxide reductase (165 aa).

Residues L49–K149 form the GAF domain.

This sequence belongs to the free Met sulfoxide reductase family.

The catalysed reaction is [thioredoxin]-disulfide + L-methionine + H2O = L-methionine (R)-S-oxide + [thioredoxin]-dithiol. Catalyzes the reversible oxidation-reduction of the R-enantiomer of free methionine sulfoxide to methionine. Specific for free L-methionine-(R)-S-oxide. The protein is Free methionine-R-sulfoxide reductase (msrC) of Escherichia coli (strain K12).